A 507-amino-acid chain; its full sequence is Maturase K (507 aa).

It belongs to the intron maturase 2 family. MatK subfamily.

The protein localises to the plastid. It localises to the chloroplast. Functionally, usually encoded in the trnK tRNA gene intron. Probably assists in splicing its own and other chloroplast group II introns. This Cupaniopsis anacardioides (Carrotwood) protein is Maturase K.